Here is a 378-residue protein sequence, read N- to C-terminus: UPF0754 membrane protein BCA_0919 (378 aa).

A run of 2 helical transmembrane segments spans residues 1-21 and 357-377; these read MNIW…GGFT and YLGA…LLFL.

This sequence belongs to the UPF0754 family.

The protein resides in the cell membrane. The sequence is that of UPF0754 membrane protein BCA_0919 from Bacillus cereus (strain 03BB102).